A 329-amino-acid chain; its full sequence is Probable ABC transporter permease protein MG188 (329 aa).

6 helical membrane-spanning segments follow: residues 30–50 (FLLF…PFFL), 96–116 (LISL…IVFV), 128–148 (VFFL…VYIF), 176–196 (ALWA…VLII), 234–254 (LIFL…LALF), and 283–303 (NLAG…GLVL). The 216-residue stretch at 88–303 (LRNSFLYSLI…VLGVCYGLVL (216 aa)) folds into the ABC transmembrane type-1 domain.

Belongs to the binding-protein-dependent transport system permease family. MalFG subfamily.

The protein resides in the cell membrane. In terms of biological role, probably part of a binding-protein-dependent transport system. Probably responsible for the translocation of the substrate across the membrane. The sequence is that of Probable ABC transporter permease protein MG188 from Mycoplasma genitalium (strain ATCC 33530 / DSM 19775 / NCTC 10195 / G37) (Mycoplasmoides genitalium).